The primary structure comprises 544 residues: Calcium-dependent protein kinase 6 (544 aa).

A disordered region spans residues 1–47; it reads MGNSCRGSFKDKIYEGNHSRPEENSKSTTTTVSSVHSPTTDQDFSKQ. G2 carries the N-myristoyl glycine lipid modification. Basic and acidic residues predominate over residues 8–25; that stretch reads SFKDKIYEGNHSRPEENS. The span at 26–40 shows a compositional bias: low complexity; the sequence is KSTTTTVSSVHSPTT. The 259-residue stretch at 85-343 folds into the Protein kinase domain; sequence YTLSRKLGQG…AHEVLRHPWI (259 aa). ATP contacts are provided by residues 91–99 and K114; that span reads LGQGQFGTT. The active-site Proton acceptor is the D209. S249 bears the Phosphoserine mark. An autoinhibitory domain region spans residues 349–379; the sequence is APDRALDPAVLSRLKQFSAMNKLKKMALKVI. EF-hand domains follow at residues 386–421, 422–457, 458–493, and 497–527; these read EEIA…YGST, LKDT…LNKL, EREE…HGMT, and LEDI…GNAG. Residues D399, D401, S403, E410, D435, D437, S439, T441, E446, D471, D473, S475, Y477, E482, D505, D507, D509, R511, and E516 each contribute to the Ca(2+) site.

It belongs to the protein kinase superfamily. Ser/Thr protein kinase family. CDPK subfamily. As to quaternary structure, interacts with SLAC1. Interacts with FD. As to expression, expressed in both guard cells and mesophyll cells. Expressed in the shoot apical meristem.

The protein localises to the cell membrane. The protein resides in the nucleus. The catalysed reaction is L-seryl-[protein] + ATP = O-phospho-L-seryl-[protein] + ADP + H(+). It catalyses the reaction L-threonyl-[protein] + ATP = O-phospho-L-threonyl-[protein] + ADP + H(+). With respect to regulation, activated by calcium. Autophosphorylation may play an important role in the regulation of the kinase activity. Functionally, may play a role in signal transduction pathways that involve calcium as a second messenger. Functions in abscisic acid (ABA) regulation of guard cell S-type anion- and Ca(2+)-permeable channels and stomatal closure. Phosphorylates FD. This Arabidopsis thaliana (Mouse-ear cress) protein is Calcium-dependent protein kinase 6 (CPK6).